A 191-amino-acid polypeptide reads, in one-letter code: Calcium and integrin-binding protein 1 (191 aa).

Gly-2 carries the N-myristoyl glycine lipid modification. EF-hand domains are found at residues 103 to 138 and 148 to 183; these read TPDI…LTGE and EMKQ…SPDF. Ca(2+) is bound by residues Asp-116, Asp-118, Asp-120, Thr-122, Asp-127, Asp-161, Asp-163, Asp-165, Thr-167, and Glu-172.

Monomer. Interacts with the heterodimeric integrin alpha-IIb/beta3 (ITGA2B-ITGB3). Interacts with ITGA2B (via cytoplasmic domain); the interaction is direct and calcium-dependent. Interacts with the protein kinases PLK2/SNK and PRKDC (via the region immediately upstream of the kinase domain). Interacts with PLK3; the interaction inhibits PLK3 kinase activity. Interacts with PSEN2. Interacts (via C-terminus) with F8. Interacts with NBR1 (via C-terminus). Interacts with FEZ1 (via C-terminus). Interacts with UBR5 (via C-terminus); the interaction is sensitive to DNA damage, and may target CIB1 for ubiquitin-mediated degradation. Interacts with IFI6; the interaction is direct. Interacts with BCL2. Interacts with ITPR3; the interaction occurs in a calcium dependent manner. Interacts with PTK2/FAK1. Interacts with MAP3K5; the interaction inhibits MAP3K5 activation by phosphorylation, and its subsequent interaction with TRAF2. Interacts (via C-terminal region) with STMN2 (via the N-terminal region); the interaction is direct, occurs in a calcium-dependent manner and attenuates the STMN2-induced neurite outgrowth inhibition. Interacts with SPHK1, the interaction occurs in a calcium-dependent manner. Interacts with ITGA2B (via C-terminal cytoplasmic tail); the interaction occurs upon platelet aggregation and is stabilized/increased in a calcium and magnesium-dependent manner. Interacts with PAK1 (via N-terminal region); the interaction is direct and occurs in a calcium-dependent manner. Interacts with RAC3 (via C-terminal region); the interaction induces their association with the cytoskeleton upon alpha-IIb/beta3 integrin-mediated adhesion. Interacts with ITGA5 and ITGAV. Interacts with MYO1C. Interacts with ITGA2B (via C-terminal cytoplasmic tail region). Interacts (via C-terminal region) with PPP3R1; the interaction increases upon cardiomyocytes hypertrophy. Interacts with CACNA1C; the interaction increases upon cardiomyocytes hypertrophy. Interacts with TAS1R2 (via C-terminus); this interaction is independent of the myristoylation state of CIB1. Interacts and forms a complex with TMC6 and TMC8; the interaction stabilizes each component of the complex.

Its subcellular location is the membrane. It localises to the cell membrane. The protein resides in the sarcolemma. The protein localises to the apical cell membrane. It is found in the cell projection. Its subcellular location is the ruffle membrane. It localises to the filopodium tip. The protein resides in the growth cone. The protein localises to the lamellipodium. It is found in the cytoplasm. Its subcellular location is the cytoskeleton. It localises to the microtubule organizing center. The protein resides in the centrosome. The protein localises to the perinuclear region. It is found in the nucleus. Its subcellular location is the neuron projection. It localises to the perikaryon. Calcium-binding protein that plays a role in the regulation of numerous cellular processes, such as cell differentiation, cell division, cell proliferation, cell migration, thrombosis, angiogenesis, cardiac hypertrophy and apoptosis. Involved in bone marrow megakaryocyte differentiation by negatively regulating thrombopoietin-mediated signaling pathway. Participates in the endomitotic cell cycle of megakaryocyte, a form of mitosis in which both karyokinesis and cytokinesis are interrupted. Plays a role in integrin signaling by negatively regulating alpha-IIb/beta3 activation in thrombin-stimulated megakaryocytes preventing platelet aggregation. Up-regulates PTK2/FAK1 activity, and is also needed for the recruitment of PTK2/FAK1 to focal adhesions; it thus appears to play an important role in focal adhesion formation. Positively regulates cell migration on fibronectin in a CDC42-dependent manner, the effect being negatively regulated by PAK1. Functions as a negative regulator of stress activated MAP kinase (MAPK) signaling pathways. Down-regulates inositol 1,4,5-trisphosphate receptor-dependent calcium signaling. Involved in sphingosine kinase SPHK1 translocation to the plasma membrane in a N-myristoylation-dependent manner preventing TNF-alpha-induced apoptosis. Regulates serine/threonine-protein kinase PLK3 activity for proper completion of cell division progression. Plays a role in microtubule (MT) dynamics during neuronal development; disrupts the MT depolymerization activity of STMN2 attenuating NGF-induced neurite outgrowth and the MT reorganization at the edge of lamellipodia. Promotes cardiomyocyte hypertrophy via activation of the calcineurin/NFAT signaling pathway. Stimulates calcineurin PPP3R1 activity by mediating its anchoring to the sarcolemma. In ischemia-induced (pathological or adaptive) angiogenesis, stimulates endothelial cell proliferation, migration and microvessel formation by activating the PAK1 and ERK1/ERK2 signaling pathway. Also promotes cancer cell survival and proliferation. May regulate cell cycle and differentiation of spermatogenic germ cells, and/or differentiation of supporting Sertoli cells. Forms a complex with TMC6/EVER1 and TMC8/EVER2 in lymphocytes and keratynocytes where CIB1 stabilizes TMC6 and TMC8 levels and reciprocally. In Bos taurus (Bovine), this protein is Calcium and integrin-binding protein 1 (CIB1).